Consider the following 132-residue polypeptide: Histone H2A.2 (132 aa).

Ser-2 carries the N-acetylserine modification. Residues Lys-5 and Lys-8 each carry the N6-acetyllysine modification. Lys-14 and Lys-22 each carry N6-succinyllysine. N5-methylglutamine is present on Gln-106. Lys-120 is modified (N6-malonyllysine). Lys-127 is covalently cross-linked (Glycyl lysine isopeptide (Lys-Gly) (interchain with G-Cter in SUMO)). Phosphoserine is present on Ser-129. The [ST]-Q motif motif lies at Ser-129 to Gln-130.

Belongs to the histone H2A family. In terms of assembly, the nucleosome is a histone octamer containing two molecules each of H2A, H2B, H3 and H4 assembled in one H3-H4 heterotetramer and two H2A-H2B heterodimers. The octamer wraps approximately 147 bp of DNA. Interacts with NAP1. In terms of processing, phosphorylated to form H2AS128ph (gamma-H2A) in response to DNA double-strand breaks (DSBs) generated by exogenous genotoxic agents and by stalled replication forks. Phosphorylation is dependent on the DNA damage checkpoint kinases MEC1/ATR and TEL1/ATM, spreads on either side of a detected DSB site and may mark the surrounding chromatin for recruitment of proteins required for DNA damage signaling and repair. Gamma-H2A interacts with ARP4, a shared component of the NuA4 histone acetyltransferase complex and the INO80 and SWR1 chromatin remodeling complexes, and serves to recruit first NuA4, mediating histone H4 acetylation, and subsequently the INO80/SWR1 complexes, facilitating DNA resection, to DSB sites. Gamma-H2A is required for sequestering cohesin around the break site, which is important for efficient post-replicative double-strand break repair by homologous recombination, holding the damaged chromatid close to its undamaged sister template. Gamma-H2A is removed from the DNA prior to the strand invasion-primer extension step of the repair process and subsequently dephosphorylated by PPH3, a component of the histone H2A phosphatase complex (HTP-C). Dephosphorylation is necessary for efficient recovery from the DNA damage checkpoint. Post-translationally, N-acetylated by NAT4. Acetylated by ESA1, a component of the NuA4 histone acetyltransferase (HAT) complex, to form H2AK4ac and H2AK7ac. In terms of processing, glutamine methylation at Gln-106 (H2AQ105me) by NOP1 is specifically dedicated to polymerase I. It is present at 35S ribosomal DNA locus and impairs binding of the FACT complex. Post-translationally, sumoylated to from H2AK126su. May lead to transcriptional repression.

It localises to the nucleus. The protein localises to the chromosome. Core component of nucleosome which plays a central role in DNA double strand break (DSB) repair. Nucleosomes wrap and compact DNA into chromatin, limiting DNA accessibility to the cellular machineries which require DNA as a template. Histones thereby play a central role in transcription regulation, DNA repair, DNA replication and chromosomal stability. DNA accessibility is regulated via a complex set of post-translational modifications of histones, also called histone code, and nucleosome remodeling. In Saccharomyces cerevisiae (strain ATCC 204508 / S288c) (Baker's yeast), this protein is Histone H2A.2 (HTA2).